Consider the following 356-residue polypeptide: Histidinol-phosphate aminotransferase 2 (356 aa).

Lys213 is modified (N6-(pyridoxal phosphate)lysine).

It belongs to the class-II pyridoxal-phosphate-dependent aminotransferase family. Histidinol-phosphate aminotransferase subfamily. As to quaternary structure, homodimer. The cofactor is pyridoxal 5'-phosphate.

The enzyme catalyses L-histidinol phosphate + 2-oxoglutarate = 3-(imidazol-4-yl)-2-oxopropyl phosphate + L-glutamate. The protein operates within amino-acid biosynthesis; L-histidine biosynthesis; L-histidine from 5-phospho-alpha-D-ribose 1-diphosphate: step 7/9. This is Histidinol-phosphate aminotransferase 2 from Burkholderia mallei (strain ATCC 23344).